Consider the following 597-residue polypeptide: mRNA-capping enzyme (597 aa).

Residues 1 to 212 form a TPase region; it reads MAYNKIPPRW…DEDGKKDSEP (212 aa). Residues 25–183 enclose the Tyrosine-protein phosphatase domain; the sequence is LPLKTMLGPR…FRRYGDIEEA (159 aa). Cys-126 serves as the catalytic Phosphocysteine intermediate. Positions 181 to 221 are disordered; it reads EEAPPPPVLPDWCFEDEDEEDEDEDGKKDSEPGSSASFSKR. Residues 193 to 204 show a composition bias toward acidic residues; that stretch reads CFEDEDEEDEDE. The interval 229-597 is GTase; the sequence is GAIFLEGITV…PPPKRLHRPT (369 aa). Lys-294 serves as the catalytic N6-GMP-lysine intermediate. Residues Arg-299, Arg-315, 343-345, 458-460, and 528-533 each bind GTP; these read DGE, KWK, and RQRIDK. Positions 330-386 are interaction with POLR2A; sequence RKDLRMHLSNTLLDGEMIIDKVNGQAVPRYLIYDIIKFNAQPVGDCDFNIRLQCIER. Residues 573 to 597 form a disordered region; that stretch reads KRKYPLDPDTELMPPPPPKRLHRPT.

In the N-terminal section; belongs to the non-receptor class of the protein-tyrosine phosphatase family. This sequence in the C-terminal section; belongs to the eukaryotic GTase family. In terms of assembly, interacts with SUPT5H and RNMT. Interacts with POLR2A (via C-terminus); this enhances guanylyltransferase activity. Binds (via GTase domain) to the elongating phosphorylated form of RNA polymerase II; can form direct interactions with the phosphorylated POLR2A C-terminal domain and indirect interactions via bound RNA.

It localises to the nucleus. It catalyses the reaction a 5'-end triphospho-ribonucleoside in mRNA + H2O = a 5'-end diphospho-ribonucleoside in mRNA + phosphate + H(+). The catalysed reaction is a 5'-end diphospho-ribonucleoside in mRNA + GTP + H(+) = a 5'-end (5'-triphosphoguanosine)-ribonucleoside in mRNA + diphosphate. RNA triphosphatase activity is inhibited by vanadate, iodoacetate and magnesium. In terms of biological role, bifunctional mRNA-capping enzyme exhibiting RNA 5'-triphosphate monophosphatase activity in the N-terminal part and mRNA guanylyltransferase activity in the C-terminal part. Catalyzes the first two steps of cap formation: by removing the gamma-phosphate from the 5'-triphosphate end of nascent mRNA to yield a diphosphate end, and by transferring the GMP moiety of GTP to the 5'-diphosphate terminus of RNA via a covalent enzyme-GMP reaction intermediate. The polypeptide is mRNA-capping enzyme (Rngtt) (Mus musculus (Mouse)).